The chain runs to 308 residues: tRNA dimethylallyltransferase (308 aa).

19–26 is an ATP binding site; that stretch reads GPTASGKS. 21-26 is a binding site for substrate; sequence TASGKS. Residues 44–47 form an interaction with substrate tRNA region; that stretch reads DSMQ.

Belongs to the IPP transferase family. In terms of assembly, monomer. Mg(2+) is required as a cofactor.

The enzyme catalyses adenosine(37) in tRNA + dimethylallyl diphosphate = N(6)-dimethylallyladenosine(37) in tRNA + diphosphate. In terms of biological role, catalyzes the transfer of a dimethylallyl group onto the adenine at position 37 in tRNAs that read codons beginning with uridine, leading to the formation of N6-(dimethylallyl)adenosine (i(6)A). This chain is tRNA dimethylallyltransferase, found in Methylobacterium radiotolerans (strain ATCC 27329 / DSM 1819 / JCM 2831 / NBRC 15690 / NCIMB 10815 / 0-1).